The primary structure comprises 165 residues: NADPH-dependent 7-cyano-7-deazaguanine reductase (165 aa).

The active-site Thioimide intermediate is Cys-56. The active-site Proton donor is the Asp-63. Substrate-binding positions include 78–80 and 97–98; these read VES and HE.

The protein belongs to the GTP cyclohydrolase I family. QueF type 1 subfamily.

It localises to the cytoplasm. It catalyses the reaction 7-aminomethyl-7-carbaguanine + 2 NADP(+) = 7-cyano-7-deazaguanine + 2 NADPH + 3 H(+). It participates in tRNA modification; tRNA-queuosine biosynthesis. Its function is as follows. Catalyzes the NADPH-dependent reduction of 7-cyano-7-deazaguanine (preQ0) to 7-aminomethyl-7-deazaguanine (preQ1). This Bacillus mycoides (strain KBAB4) (Bacillus weihenstephanensis) protein is NADPH-dependent 7-cyano-7-deazaguanine reductase.